The chain runs to 63 residues: Large ribosomal subunit protein uL30 (63 aa).

The protein belongs to the universal ribosomal protein uL30 family. In terms of assembly, part of the 50S ribosomal subunit.

This is Large ribosomal subunit protein uL30 from Rhodospirillum rubrum (strain ATCC 11170 / ATH 1.1.1 / DSM 467 / LMG 4362 / NCIMB 8255 / S1).